We begin with the raw amino-acid sequence, 286 residues long: 2-hydroxy-6-oxo-6-phenylhexa-2,4-dienoate hydrolase (286 aa).

Residues 42-43, Asn51, Asn111, Ser180, and Arg190 each bind substrate; that span reads GG. His265 acts as the Proton acceptor in catalysis. Trp266 is a substrate binding site.

The protein belongs to the AB hydrolase superfamily. BphD family. Homodimer.

The catalysed reaction is 2,6-dioxo-6-phenylhexa-3-enoate + H2O = 2-oxopent-4-enoate + benzoate + H(+). It participates in xenobiotic degradation; biphenyl degradation; 2-hydroxy-2,4-pentadienoate and benzoate from biphenyl: step 4/4. In terms of biological role, catalyzes an unusual C-C bond hydrolysis of 2-hydroxy-6-oxo-6-phenylhexa-2,4-dienoic acid (HOPDA) to produce benzoic acid and 2-hydroxy-2,4-pentadienoic acid (HPD). The chain is 2-hydroxy-6-oxo-6-phenylhexa-2,4-dienoate hydrolase from Polaromonas naphthalenivorans (strain CJ2).